An 873-amino-acid polypeptide reads, in one-letter code: Leucine--tRNA ligase (873 aa).

A 'HIGH' region motif is present at residues 48-58; sequence PYPSGKLHMGH. Residues 636–640 carry the 'KMSKS' region motif; that stretch reads KMSKS. K639 provides a ligand contact to ATP.

The protein belongs to the class-I aminoacyl-tRNA synthetase family.

It is found in the cytoplasm. It carries out the reaction tRNA(Leu) + L-leucine + ATP = L-leucyl-tRNA(Leu) + AMP + diphosphate. The chain is Leucine--tRNA ligase from Cupriavidus pinatubonensis (strain JMP 134 / LMG 1197) (Cupriavidus necator (strain JMP 134)).